A 140-amino-acid polypeptide reads, in one-letter code: MEDFNFGRELRLLTPSHYSRIFNEPARAATPFFTLLAKPNDQDQPRLGLTVAKKRVKKACQRNRIKRLARECFRLNKHNIDNIDIVLMVKSGIDEQSNEELTKQLTKLWRKINERCKPGAPKPPPFKKRPNKSVKSNKQT.

The interval 115-140 is disordered; it reads RCKPGAPKPPPFKKRPNKSVKSNKQT.

Belongs to the RnpA family. As to quaternary structure, consists of a catalytic RNA component (M1 or rnpB) and a protein subunit.

It catalyses the reaction Endonucleolytic cleavage of RNA, removing 5'-extranucleotides from tRNA precursor.. Its function is as follows. RNaseP catalyzes the removal of the 5'-leader sequence from pre-tRNA to produce the mature 5'-terminus. It can also cleave other RNA substrates such as 4.5S RNA. The protein component plays an auxiliary but essential role in vivo by binding to the 5'-leader sequence and broadening the substrate specificity of the ribozyme. The sequence is that of Ribonuclease P protein component from Pseudoalteromonas translucida (strain TAC 125).